Consider the following 222-residue polypeptide: MSLIRTILKLVVVVGFLSLTVQFIRHWMANKQYVFTKEEVAKLAKQYAGQDHEQAFSKVVVELRRRYPGHILPDEDLQWVFVNAGGWMGSMCLLHASLTEYVLLFGTAVDTGGHSGRYWAEISDTIISGTFRQWKEGTTKSETYYPGDTIVHSAGEATSVQWSSGTWMVEYGRGFIPSTLGFALADTMFSTQDFLTLFYTARVYVKGMILEASTFLTESGVL.

Topologically, residues 1–6 are lumenal; it reads MSLIRT. A helical transmembrane segment spans residues 7 to 29; it reads ILKLVVVVGFLSLTVQFIRHWMA. Over 30–222 the chain is Cytoplasmic; it reads NKQYVFTKEE…STFLTESGVL (193 aa). Residues 97-104 form an important for ligand-binding region; sequence SLTEYVLL. Positions 175-222 are C-terminal hydrophobic region; sequence FIPSTLGFALADTMFSTQDFLTLFYTARVYVKGMILEASTFLTESGVL.

It belongs to the ERG2 family. Homotrimer.

The protein resides in the nucleus inner membrane. It localises to the nucleus outer membrane. Its subcellular location is the nucleus envelope. It is found in the cytoplasmic vesicle. The protein localises to the endoplasmic reticulum membrane. The protein resides in the membrane. Its function is as follows. May function in lipid transport from the endoplasmic reticulum and be involved in a wide array of cellular functions probably through regulation of the biogenesis of lipid microdomains at the plasma membrane. May regulate calcium efflux at the endoplasmic reticulum. The chain is Sigma non-opioid intracellular receptor 1 (sigmar1) from Danio rerio (Zebrafish).